The sequence spans 5147 residues: Cadherin-related tumor suppressor (5147 aa).

An N-terminal signal peptide occupies residues 1 to 35 (MERLLLLFFLLLAGRESLCQTGDTKLELLAPRGRS). Cadherin domains follow at residues 36–156 (YATT…SPEF), 157–270 (PEPS…PPIF), 271–382 (DHSD…DPII), 383–494 (SFRF…EPVF), 495–599 (EKSE…APQF), 600–708 (SQRE…DPQF), 709–820 (YPRH…LEML), 821–942 (ECGQ…APVF), 943–1049 (ALDR…TPVF), 1050–1153 (DHTS…APQF), 1154–1278 (TNST…APEF), 1279–1384 (LRAP…APEF), 1385–1489 (TQSS…PPIF), 1490–1601 (PSTA…APVF), 1602–1713 (VSMN…VPQF), 1714–1823 (EQRS…PPQF), 1824–1922 (LDTP…PPLF), 1923–2027 (EDTV…APIF), 2028–2167 (DPMS…VPVF), 2168–2278 (ISAN…SPVF), 2279–2385 (DPKQ…PTFL), 2386–2491 (DSPY…DPVF), 2492–2596 (ELQS…IPKF), 2597–2703 (DSTT…FPTF), 2704–2810 (AYMA…APVM), 2811–2913 (EQLI…PPKF), 2914–3013 (TRLF…APEF), 3014–3124 (EHSF…PPKF), 3125–3229 (EQAE…TPRF), 3230–3334 (SVNS…PPVF), 3335–3439 (NHKE…YPQF), 3440–3545 (LQPV…PPEF), 3546–3651 (IKHY…GPTF), and 3652–3756 (TPEG…NPST). Residues 36–4583 (YATTYEQYAA…GQDAAQVADP (4548 aa)) are Extracellular-facing. 6 N-linked (GlcNAc...) asparagine glycosylation sites follow: asparagine 239, asparagine 257, asparagine 276, asparagine 280, asparagine 402, and asparagine 461. Residues asparagine 605 and asparagine 631 are each glycosylated (N-linked (GlcNAc...) asparagine). Residues asparagine 1155, asparagine 1367, and asparagine 1458 are each glycosylated (N-linked (GlcNAc...) asparagine). Asparagine 1751, asparagine 1831, and asparagine 1880 each carry an N-linked (GlcNAc...) asparagine glycan. N-linked (GlcNAc...) asparagine glycosylation is found at asparagine 2080, asparagine 2171, asparagine 2247, asparagine 2290, asparagine 2437, and asparagine 2581. Asparagine 2799 carries N-linked (GlcNAc...) asparagine glycosylation. Residues asparagine 2920, asparagine 2946, and asparagine 2967 are each glycosylated (N-linked (GlcNAc...) asparagine). N-linked (GlcNAc...) asparagine glycans are attached at residues asparagine 3167, asparagine 3303, asparagine 3386, asparagine 3389, and asparagine 3525. Asparagine 3852, asparagine 3865, and asparagine 3905 each carry an N-linked (GlcNAc...) asparagine glycan. EGF-like domains follow at residues 3950-4011 (GYEP…EQCS), 4013-4049 (RQDPCLPNPCHSQVQCRRLGSDFQCMCPANRDGKHCE), 4052-4090 (RSDVCYSKPCRNGGSCQRSPDGSSYFCLCRPGFRGNQCE), and 4092-4128 (VSDSCRPNPCLHGGLCVSLKPGYKCNCTPGRYGRHCE). Cystine bridges form between cysteine 3954–cysteine 3966, cysteine 3960–cysteine 3999, cysteine 4001–cysteine 4010, cysteine 4017–cysteine 4028, cysteine 4022–cysteine 4037, cysteine 4039–cysteine 4048, cysteine 4056–cysteine 4067, cysteine 4061–cysteine 4078, cysteine 4080–cysteine 4089, cysteine 4096–cysteine 4107, cysteine 4101–cysteine 4116, cysteine 4118–cysteine 4127, cysteine 4294–cysteine 4320, cysteine 4325–cysteine 4341, cysteine 4334–cysteine 4350, and cysteine 4352–cysteine 4361. The region spanning 4129 to 4320 (RFSYGFQPLS…LQQKGILAGC (192 aa)) is the Laminin G-like 1 domain. The N-linked (GlcNAc...) asparagine glycan is linked to asparagine 4306. An EGF-like 5 domain is found at 4321 to 4362 (NRQACQPALAAERCGGFAGQCIDRWSSSLCQCGGHLQSPDCS). Residues 4402–4569 (DNQQMRERRA…RYHGKIESGC (168 aa)) form the Laminin G-like 2 domain. Residues asparagine 4414, asparagine 4471, asparagine 4487, asparagine 4539, and asparagine 4550 are each glycosylated (N-linked (GlcNAc...) asparagine). An intrachain disulfide couples cysteine 4536 to cysteine 4569. Residues 4584 to 4609 (LSIGFTLVIVFFVILVVAILGSYVIY) form a helical membrane-spanning segment. Over 4610 to 5147 (RFRGKQEKIG…NGPAAPEEYV (538 aa)) the chain is Cytoplasmic. The interval 4744–4771 (PEHYDLENASSIAPSDIDIVYHYKGYRE) is essential for stability of mitochondrial electron chain complexes I and V, and promotes interaction with ND-24. Disordered regions lie at residues 4787 to 4850 (AYTH…SQQP), 4871 to 4921 (TSSS…QTSM), and 4967 to 5041 (GDVD…PIPP). Positions 4826–4835 (SASRTHQSTP) are enriched in polar residues. Composition is skewed to low complexity over residues 4838 to 4850 (RLSPSSELSSQQP) and 4891 to 4918 (SPVMSQLSGQSSSASRQKPGVPQQQAQQ). Serine 4843 is subject to Phosphoserine. Residues 4972–5008 (HSSTSTDESGNDSFTCSEIEYDNNSLSGDGKYSTSKS) show a composition bias toward polar residues. Phosphoserine occurs at positions 5054 and 5061. The interval 5113 to 5147 (PDTNGPSQQQQQQTQVVSTLRMPSSNGPAAPEEYV) is disordered. A compositionally biased stretch (low complexity) spans 5119–5131 (SQQQQQQTQVVST).

Interacts with Fbxl7. Ft-mito interacts with NADH dehydrogenase subunit ND-24 and with ATP synthase subunit ATPsynC. In terms of processing, phosphorylated by fj on Ser/Thr of cadherin domains. Phosphorylation by fj enhances binding to ds. Phosphorylated in the cytoplasmic domain in a dco-dependent manner which is promoted by ds. Post-translationally, proteolytically cleaved to yield stably associated N- and C-terminal fragments. The C-terminal fragment is processed further to release a 68 kDa mitochondrial fragment, Ft-mito.

The protein localises to the cell membrane. Its subcellular location is the apical cell membrane. It localises to the mitochondrion. In terms of biological role, involved in regulation of planar cell polarity in the compound eye where it is required for correct specification of the R3 and R4 photoreceptor cells by regulating Fz activity in the R3/R4 precursor cells. This is likely to occur through creation of an ft gradient so that the equatorial R3/R4 precursor cell has a higher level of ft function than its polar neighbor. Also required for planar cell polarity of wing hairs. Mediates heterophilic cell adhesion in vitro and is required to stabilize ds on the cell surface. Involved in regulation of eye imaginal disk size. Upstream component of the Hippo pathway where it is likely to act as a cell surface receptor involved in regulation of tissue size and is required for the localization and stability of ex. Probably acts as a cell surface receptor for ds. Regulates mitochondrial electron transport chain integrity and promotes oxidative phosphorylation. The polypeptide is Cadherin-related tumor suppressor (Drosophila melanogaster (Fruit fly)).